A 294-amino-acid chain; its full sequence is UDP-3-O-acyl-N-acetylglucosamine deacetylase (294 aa).

Zn(2+) contacts are provided by His75, His232, and Asp236. His259 serves as the catalytic Proton donor.

The protein belongs to the LpxC family. The cofactor is Zn(2+).

It catalyses the reaction a UDP-3-O-[(3R)-3-hydroxyacyl]-N-acetyl-alpha-D-glucosamine + H2O = a UDP-3-O-[(3R)-3-hydroxyacyl]-alpha-D-glucosamine + acetate. It functions in the pathway glycolipid biosynthesis; lipid IV(A) biosynthesis; lipid IV(A) from (3R)-3-hydroxytetradecanoyl-[acyl-carrier-protein] and UDP-N-acetyl-alpha-D-glucosamine: step 2/6. Catalyzes the hydrolysis of UDP-3-O-myristoyl-N-acetylglucosamine to form UDP-3-O-myristoylglucosamine and acetate, the committed step in lipid A biosynthesis. This chain is UDP-3-O-acyl-N-acetylglucosamine deacetylase, found in Sulfurimonas denitrificans (strain ATCC 33889 / DSM 1251) (Thiomicrospira denitrificans (strain ATCC 33889 / DSM 1251)).